Reading from the N-terminus, the 347-residue chain is RNA 3'-terminal phosphate cyclase (347 aa).

ATP is bound by residues Gln109 and 290–294; that span reads YLADQ. His315 acts as the Tele-AMP-histidine intermediate in catalysis.

This sequence belongs to the RNA 3'-terminal cyclase family. Type 1 subfamily.

The protein resides in the cytoplasm. It catalyses the reaction a 3'-end 3'-phospho-ribonucleotide-RNA + ATP = a 3'-end 2',3'-cyclophospho-ribonucleotide-RNA + AMP + diphosphate. In terms of biological role, catalyzes the conversion of 3'-phosphate to a 2',3'-cyclic phosphodiester at the end of RNA. The mechanism of action of the enzyme occurs in 3 steps: (A) adenylation of the enzyme by ATP; (B) transfer of adenylate to an RNA-N3'P to produce RNA-N3'PP5'A; (C) and attack of the adjacent 2'-hydroxyl on the 3'-phosphorus in the diester linkage to produce the cyclic end product. The biological role of this enzyme is unknown but it is likely to function in some aspects of cellular RNA processing. This Ralstonia nicotianae (strain ATCC BAA-1114 / GMI1000) (Ralstonia solanacearum) protein is RNA 3'-terminal phosphate cyclase.